The following is a 297-amino-acid chain: MERERHVPVLLQDAIRYLNVRRGGTYADATLGLAGHSSAIARLLGPGGTLIAFDRDPEAMELAKSRLDALRAELGSEMPKVILHSTEFSEAEDLIEPGSLDGLLADFGVSSLQFDEAHRGFSFQADGPLDMRMNPRVGLTAAQVVNQFGEKELADLIYEFGEERRSRRIARAIVRARPVSTTAQLARVVSAAAPAMKSERIHPATRTFQALRIYVNQELGQIEALLKVAPKLLRKGGRLVVISFHSLEDRIAKDALREGGQQGIYEVLTRKPLTAGEEETDRNPRARSAKLRAAEKK.

S-adenosyl-L-methionine-binding positions include 34–36 (AGH), aspartate 54, phenylalanine 88, aspartate 106, and glutamine 113. The tract at residues 272–297 (PLTAGEEETDRNPRARSAKLRAAEKK) is disordered.

This sequence belongs to the methyltransferase superfamily. RsmH family.

Its subcellular location is the cytoplasm. It catalyses the reaction cytidine(1402) in 16S rRNA + S-adenosyl-L-methionine = N(4)-methylcytidine(1402) in 16S rRNA + S-adenosyl-L-homocysteine + H(+). In terms of biological role, specifically methylates the N4 position of cytidine in position 1402 (C1402) of 16S rRNA. In Acidobacterium capsulatum (strain ATCC 51196 / DSM 11244 / BCRC 80197 / JCM 7670 / NBRC 15755 / NCIMB 13165 / 161), this protein is Ribosomal RNA small subunit methyltransferase H.